Consider the following 366-residue polypeptide: MNKVILYCRPGFEKECAAEITEKATQHNAFGFARVKENSGYVVFECYQHEDAERLVKTLPFHELIFVRQMFVSGDLLRDLPPEDRITPIVGMLTGAIERAGDLRVEVPDTNESKELMKFCRKFTVPLRAALREHKILLGHEKADRPVLHVLFIAPGCCYVGYSYSNNNSPFYMGIPRLKFPSDAPSRSTLKLEEAFHVFVPADEWDERLGSGMYAVDLGACPGGWTYQLVKRSMMVYAVDNGPMAPSLMDTGQVMHHQADGFRFEPPRNNVYWLVCDMVEKPAKVTSLMSDWLIKGWCRETIFNLKLPMKKRYEEVSQNLALLRERLSENGIHAEVHAKHLYHDREEVTVHVRRFWSAVPGRRDER.

S-adenosyl-L-methionine-binding positions include serine 188, 221–224 (CPGG), aspartate 240, aspartate 260, and aspartate 277. Catalysis depends on lysine 306, which acts as the Proton acceptor.

The protein belongs to the class I-like SAM-binding methyltransferase superfamily. RNA methyltransferase RlmE family. RlmM subfamily. In terms of assembly, monomer.

The protein resides in the cytoplasm. The catalysed reaction is cytidine(2498) in 23S rRNA + S-adenosyl-L-methionine = 2'-O-methylcytidine(2498) in 23S rRNA + S-adenosyl-L-homocysteine + H(+). In terms of biological role, catalyzes the 2'-O-methylation at nucleotide C2498 in 23S rRNA. This Pectobacterium atrosepticum (strain SCRI 1043 / ATCC BAA-672) (Erwinia carotovora subsp. atroseptica) protein is Ribosomal RNA large subunit methyltransferase M.